A 4662-amino-acid polypeptide reads, in one-letter code: Protein PF3D7_1417600 (4662 aa).

The next 2 membrane-spanning stretches (helical) occupy residues 136-156 (INYV…YLYI) and 161-181 (YIYY…FHII). Residues 466–489 (IKNIDSINKNHKRLIKISNYNITN) form an LRR 1 repeat. Residues 583–710 (YRNDGDVNNK…KMKPDNTLNE (128 aa)) form a disordered region. Low complexity predominate over residues 590–644 (NNKNGYNNNEHSNSSNERSNNNGDNNNNNHNNNNHNNNHHNNGSNNHNGNNNSNN). Residues 650–666 (DDDKKGNDKKNEDKDDE) show a composition bias toward basic and acidic residues. The segment covering 690 to 701 (KKRKEKSKNKNK) has biased composition (basic residues). One can recognise an HSA domain in the interval 783–856 (YKPTEPVNIF…ISNDIKMFWF (74 aa)). The segment at 942–967 (GLMNKMSHQNGKNNNHNDYNNKCEDN) is disordered. The stretch at 1150 to 1172 (NVHINHIQYDDNNLYYNDDLYNY) is one LRR 2 repeat. Low complexity predominate over residues 1505–1524 (NNNNNSNNNNSNSNNNSNSN). Disordered stretches follow at residues 1505–1540 (NNNN…NNSS) and 1705–1761 (KINS…NEKD). A compositionally biased stretch (basic and acidic residues) spans 1710–1761 (NNDKSDDKNDDKNDKKNDGKNDKNDEKDDNKTGEKGDNKIGEKDDNKINEKD). LRR repeat units lie at residues 2063–2086 (ITKV…MFNK) and 2129–2153 (DEEI…NVKD). Positions 2228-2261 (KNKSNKKKRAKKNIKLGEEENESECNNEGECNNE) are disordered. The segment covering 2230-2241 (KSNKKKRAKKNI) has biased composition (basic residues). Residues 2246–2261 (EENESECNNEGECNNE) are compositionally biased toward acidic residues. LRR repeat units follow at residues 2672 to 2695 (LDKL…KTID), 2773 to 2796 (NTVL…TVDI), 2864 to 2888 (INDD…VNNN), and 2904 to 2929 (ANNI…YNNS). The segment at 2956–2975 (MNNTKQRSHSSYHTSFPMQN) is disordered. 6 LRR repeats span residues 3377-3400 (QNNM…NITM), 3438-3461 (NNSM…YNNS), 3756-3781 (SQRL…NINN), 3935-3960 (QPNI…NINN), 3965-3985 (QPNI…SMNQ), and 3986-4010 (PNIN…NINN). Residues 4203–4272 (DMNQQERLQQ…ERLQQKWEQQ (70 aa)) adopt a coiled-coil conformation. LRR repeat units follow at residues 4296-4321 (YQEL…IFLK) and 4333-4357 (QKMH…SLQQ). The segment at 4384–4412 (QMNHQQINKHQMNQQQMNKQQMNQQQINQ) is disordered.

The protein resides in the membrane. This is Protein PF3D7_1417600 from Plasmodium falciparum (isolate 3D7).